The following is a 135-amino-acid chain: Large ribosomal subunit protein uL16 (135 aa).

This sequence belongs to the universal ribosomal protein uL16 family. As to quaternary structure, part of the 50S ribosomal subunit.

In terms of biological role, binds 23S rRNA and is also seen to make contacts with the A and possibly P site tRNAs. This chain is Large ribosomal subunit protein uL16 (rplP), found in Carsonella ruddii (strain PV).